Consider the following 305-residue polypeptide: Phosphatidylglycerol--prolipoprotein diacylglyceryl transferase (305 aa).

A run of 3 helical transmembrane segments spans residues 10 to 30, 59 to 79, and 92 to 112; these read FLIS…GAII, LMLG…AFEW, and LTTG…STVI. Arg-140 contacts a 1,2-diacyl-sn-glycero-3-phospho-(1'-sn-glycerol). 2 helical membrane passes run 182-202 and 260-280; these read LFHP…GILL and IRVA…LIFL.

Belongs to the Lgt family.

The protein resides in the cell membrane. It carries out the reaction L-cysteinyl-[prolipoprotein] + a 1,2-diacyl-sn-glycero-3-phospho-(1'-sn-glycerol) = an S-1,2-diacyl-sn-glyceryl-L-cysteinyl-[prolipoprotein] + sn-glycerol 1-phosphate + H(+). It functions in the pathway protein modification; lipoprotein biosynthesis (diacylglyceryl transfer). Functionally, catalyzes the transfer of the diacylglyceryl group from phosphatidylglycerol to the sulfhydryl group of the N-terminal cysteine of a prolipoprotein, the first step in the formation of mature lipoproteins. This chain is Phosphatidylglycerol--prolipoprotein diacylglyceryl transferase, found in Chloroflexus aggregans (strain MD-66 / DSM 9485).